Reading from the N-terminus, the 276-residue chain is Aldo-keto reductase Mkms_1985 (276 aa).

Residue Y50 is the Proton donor of the active site. NADPH-binding residues include L190, I228, K230, S231, V232, R236, S239, and N240. A disordered region spans residues 257–276; that stretch reads SSLEDGSRLGPDPKTFNFTG.

The protein belongs to the aldo/keto reductase family.

This Mycobacterium sp. (strain KMS) protein is Aldo-keto reductase Mkms_1985.